The chain runs to 192 residues: Signal peptidase complex subunit 2 (192 aa).

The Cytoplasmic portion of the chain corresponds to 1 to 46 (MEEKKTESTNKNVKKANLLDHHSIKHILDESVSDIVTSRGYKEDVR). The chain crosses the membrane as a helical span at residues 47 to 69 (LSNLKLILGTIIIVVALVAQFYN). Residues 70 to 78 (KKFPENRDF) are Lumenal-facing. A helical membrane pass occupies residues 79–98 (LIGCIALYVVLNAVLQLILY). Over 99-192 (TKEKNAILFT…YAEEEPKKKK (94 aa)) the chain is Cytoplasmic.

This sequence belongs to the SPCS2 family. As to quaternary structure, component of the signal peptidase complex (SPC) composed of a catalytic subunit SEC11 and three accessory subunits SPCS1, SPCS2 and SPCS3. The complex induces a local thinning of the ER membrane which is used to measure the length of the signal peptide (SP) h-region of protein substrates. This ensures the selectivity of the complex towards h-regions shorter than 18-20 amino acids.

It is found in the endoplasmic reticulum membrane. In terms of biological role, component of the signal peptidase complex (SPC) which catalyzes the cleavage of N-terminal signal sequences from nascent proteins as they are translocated into the lumen of the endoplasmic reticulum. Enhances the enzymatic activity of SPC and facilitates the interactions between different components of the translocation site. The chain is Signal peptidase complex subunit 2 from Arabidopsis thaliana (Mouse-ear cress).